The sequence spans 331 residues: Isopenicillin N synthase (331 aa).

Residues R87, Y91, S183, and Y189 each contribute to the isopenicillin N site. N-[(5S)-5-amino-5-carboxypentanoyl]-L-cysteinyl-D-valine is bound by residues R87, Y91, S183, Y189, H214, and D216. Residues 176–288 enclose the Fe2OG dioxygenase domain; the sequence is KPDDTLASVV…RQSLPFFVNL (113 aa). Fe(2+) is bound by residues H214, D216, and H270. R279 contributes to the 2-oxoglutarate binding site. An isopenicillin N-binding site is contributed by S281. S281 contacts N-[(5S)-5-amino-5-carboxypentanoyl]-L-cysteinyl-D-valine.

This sequence belongs to the iron/ascorbate-dependent oxidoreductase family. Monomer. Fe(2+) serves as cofactor.

It localises to the cytoplasm. Its subcellular location is the cytosol. It carries out the reaction N-[(5S)-5-amino-5-carboxypentanoyl]-L-cysteinyl-D-valine + O2 = isopenicillin N + 2 H2O. It participates in antibiotic biosynthesis; penicillin G biosynthesis; penicillin G from L-alpha-aminoadipate and L-cysteine and L-valine: step 2/3. In terms of biological role, isopenicillin N synthase; part of the gene cluster that mediates the biosynthesis of penicillin, the world's most important antibiotic. IpnA catalyzes the cyclization of the tripeptide N-[(5S)-5-amino-5-carboxypentanoyl]-L-cysteinyl-D-valine (LLD-ACV or ACV) to form isopenicillin N (IPN) that contains the beta-lactam nucleus. The penicillin biosynthesis occurs via 3 enzymatic steps, the first corresponding to the production of the tripeptide N-[(5S)-5-amino-5-carboxypentanoyl]-L-cysteinyl-D-valine (LLD-ACV or ACV) by the NRPS acvA. The tripeptide ACV is then cyclized to isopenicillin N (IPN) by the isopenicillin N synthase ipnA that forms the beta-lactam nucleus. Finally, the alpha-aminoadipyl side chain is exchanged for phenylacetic acid by the isopenicillin N acyltransferase penDE to yield penicillin in the peroxisomal matrix. This chain is Isopenicillin N synthase, found in Emericella nidulans (strain FGSC A4 / ATCC 38163 / CBS 112.46 / NRRL 194 / M139) (Aspergillus nidulans).